The following is a 191-amino-acid chain: HTH-type transcriptional regulator YjdC (191 aa).

One can recognise an HTH tetR-type domain in the interval 1-60 (MQREDVLGEALKLLELQGIANTTLEMVAERVDYPLDELRRFWPDKEAILYDALRYLSQQI).

This chain is HTH-type transcriptional regulator YjdC (yjdC), found in Escherichia coli (strain K12).